Reading from the N-terminus, the 83-residue chain is Small ribosomal subunit protein bS16 (83 aa).

Belongs to the bacterial ribosomal protein bS16 family.

The sequence is that of Small ribosomal subunit protein bS16 from Ectopseudomonas mendocina (strain ymp) (Pseudomonas mendocina).